The following is a 245-amino-acid chain: Biosynthetic peptidoglycan transglycosylase (245 aa).

The helical transmembrane segment at 10-30 (FLALLFVVATLAQLWYLGQVL) threads the bilayer. Residues 224–245 (DPGTVPLPPPPEPTAPPEGNTQ) are disordered. A compositionally biased stretch (pro residues) spans 226-239 (GTVPLPPPPEPTAP).

It belongs to the glycosyltransferase 51 family.

The protein localises to the cell inner membrane. It catalyses the reaction [GlcNAc-(1-&gt;4)-Mur2Ac(oyl-L-Ala-gamma-D-Glu-L-Lys-D-Ala-D-Ala)](n)-di-trans,octa-cis-undecaprenyl diphosphate + beta-D-GlcNAc-(1-&gt;4)-Mur2Ac(oyl-L-Ala-gamma-D-Glu-L-Lys-D-Ala-D-Ala)-di-trans,octa-cis-undecaprenyl diphosphate = [GlcNAc-(1-&gt;4)-Mur2Ac(oyl-L-Ala-gamma-D-Glu-L-Lys-D-Ala-D-Ala)](n+1)-di-trans,octa-cis-undecaprenyl diphosphate + di-trans,octa-cis-undecaprenyl diphosphate + H(+). It participates in cell wall biogenesis; peptidoglycan biosynthesis. In terms of biological role, peptidoglycan polymerase that catalyzes glycan chain elongation from lipid-linked precursors. The protein is Biosynthetic peptidoglycan transglycosylase of Alcanivorax borkumensis (strain ATCC 700651 / DSM 11573 / NCIMB 13689 / SK2).